We begin with the raw amino-acid sequence, 535 residues long: Dual specificity mitogen-activated protein kinase kinase 7 (535 aa).

The residue at position 2 (Ala-2) is an N-acetylalanine. The stretch at 2 to 30 (AASSLEQKLSRLEAKLKQENREARRRIDL) forms a coiled coil. Residues 37–73 (QRPRPIIVITLSPAPAPSQRAALQLPLANDGGSRSPS) form a d domain region. Positions 63–93 (LANDGGSRSPSSESSPQHPTPPTRPRHMLGL) are disordered. Residues 69 to 79 (SRSPSSESSPQ) are compositionally biased toward low complexity. The 261-residue stretch at 136 to 396 (LENLGEMGSG…YNKLLEHSFI (261 aa)) folds into the Protein kinase domain. Residues 142–150 (MGSGTCGQV) and Lys-165 contribute to the ATP site. Asp-259 (proton acceptor) is an active-site residue. Residue Ser-287 is modified to Phosphoserine; by MAP3K. The residue at position 291 (Thr-291) is a Phosphothreonine; by MAP3K. The segment at 393-416 (HSFIKHYEILEVDVASWFKDVMAK) is DVD domain. The residue at position 427 (Ser-427) is a Phosphoserine.

Belongs to the protein kinase superfamily. STE Ser/Thr protein kinase family. MAP kinase kinase subfamily. In terms of assembly, interacts with RASSF7, the interaction promotes phosphorylation. Interacts with VRK2. Interacts (via its D domain) with its substrates MAPK8/JNK1, MAPK9/JNK2 and MAPK10/JNK3. Interacts (via its DVD domain) with MAP3Ks activators like MAP3K5/ASK1 and MAP3K1/MEKK1. Interacts with SH3RF1, MAPK8IP1/JIP1, MAPK8IP2/JIP2 and MAPK8IP3/JIP3 scaffold proteins. Found in a complex with SH3RF1, RAC1, MAP3K11/MLK3, MAPK8IP1/JIP1 and MAPK8/JNK1. Found in a complex with SH3RF1, RAC2, MAP3K7/TAK1, MAPK8IP1/JIP1, MAPK8/JNK1 and MAPK9/JNK2. Requires Mg(2+) as cofactor. In terms of processing, activated by phosphorylation on Ser-287 and Thr-291 by MAP kinase kinase kinases (MAP3Ks). Expressed at high levels in brain, lung, liver, skeletal muscle, kidney, and testis and at lower levels in the heart and spleen.

The protein localises to the nucleus. It localises to the cytoplasm. It carries out the reaction L-seryl-[protein] + ATP = O-phospho-L-seryl-[protein] + ADP + H(+). The catalysed reaction is L-threonyl-[protein] + ATP = O-phospho-L-threonyl-[protein] + ADP + H(+). The enzyme catalyses L-tyrosyl-[protein] + ATP = O-phospho-L-tyrosyl-[protein] + ADP + H(+). Activated by phosphorylation by specific MAP kinase kinase kinases such as MAP3K1/MEKK1, MAP3K3/MEKK3, MAP3K11/MLK3 and MAP3K12/DLK. Isoforms 3 and 4 have lower basal activity but a higher level of inducible activation, than isoforms 2, 6, 7 and 8. Functionally, dual specificity protein kinase which acts as an essential component of the MAP kinase signal transduction pathway. Essential component of the stress-activated protein kinase/c-Jun N-terminal kinase (SAP/JNK) signaling pathway. With MAP2K4/MKK4, is the one of the only known kinase to directly activate the stress-activated protein kinase/c-Jun N-terminal kinases MAPK8/JNK1, MAPK9/JNK2 and MAPK10/JNK3. MAP2K4/MKK4 and MAP2K7/MKK7 both activate the JNKs by phosphorylation, but they differ in their preference for the phosphorylation site in the Thr-Pro-Tyr motif. MAP2K4/MKK4 shows preference for phosphorylation of the Tyr residue and MAP2K7/MKK7 for the Thr residue. The monophosphorylation of JNKs on the Thr residue is sufficient to increase JNK activity indicating that MAP2K7/MKK7 is important to trigger JNK activity, while the additional phosphorylation of the Tyr residue by MAP2K4/MKK4 ensures optimal JNK activation. Has a specific role in JNK signal transduction pathway activated by pro-inflammatory cytokines. The MKK/JNK signaling pathway is also involved in mitochondrial death signaling pathway, including the release cytochrome c, leading to apoptosis. Part of a non-canonical MAPK signaling pathway, composed of the upstream MAP3K12 kinase and downstream MAP kinases MAPK1/ERK2 and MAPK3/ERK1, that enhances the AP-1-mediated transcription of APP in response to APOE. In Mus musculus (Mouse), this protein is Dual specificity mitogen-activated protein kinase kinase 7.